We begin with the raw amino-acid sequence, 337 residues long: Ketol-acid reductoisomerase (NADP(+)) (337 aa).

One can recognise a KARI N-terminal Rossmann domain in the interval 3–183 (VEMFYDADAD…GGARAGVIKT (181 aa)). Residues 26–29 (YGSQ), lysine 49, serine 52, serine 54, and 84–87 (DTAQ) contribute to the NADP(+) site. Residue histidine 109 is part of the active site. NADP(+) is bound at residue glycine 135. The region spanning 184–329 (TFKEETETDL…KKLRDLMSWV (146 aa)) is the KARI C-terminal knotted domain. Positions 192, 196, 228, and 232 each coordinate Mg(2+). Position 253 (serine 253) interacts with substrate.

Belongs to the ketol-acid reductoisomerase family. Mg(2+) is required as a cofactor.

The catalysed reaction is (2R)-2,3-dihydroxy-3-methylbutanoate + NADP(+) = (2S)-2-acetolactate + NADPH + H(+). The enzyme catalyses (2R,3R)-2,3-dihydroxy-3-methylpentanoate + NADP(+) = (S)-2-ethyl-2-hydroxy-3-oxobutanoate + NADPH + H(+). It functions in the pathway amino-acid biosynthesis; L-isoleucine biosynthesis; L-isoleucine from 2-oxobutanoate: step 2/4. Its pathway is amino-acid biosynthesis; L-valine biosynthesis; L-valine from pyruvate: step 2/4. Involved in the biosynthesis of branched-chain amino acids (BCAA). Catalyzes an alkyl-migration followed by a ketol-acid reduction of (S)-2-acetolactate (S2AL) to yield (R)-2,3-dihydroxy-isovalerate. In the isomerase reaction, S2AL is rearranged via a Mg-dependent methyl migration to produce 3-hydroxy-3-methyl-2-ketobutyrate (HMKB). In the reductase reaction, this 2-ketoacid undergoes a metal-dependent reduction by NADPH to yield (R)-2,3-dihydroxy-isovalerate. In Mycolicibacterium vanbaalenii (strain DSM 7251 / JCM 13017 / BCRC 16820 / KCTC 9966 / NRRL B-24157 / PYR-1) (Mycobacterium vanbaalenii), this protein is Ketol-acid reductoisomerase (NADP(+)).